Consider the following 646-residue polypeptide: MDDIDAMFSDMLQEMDLLTQSLDAEVDSAPLAKPPTIPEPQEMNFSIGFANFNESLNDLEDNDLDALMADLVADISATEEKFATERDTSKGSVPVAPAPSKPQSNFSLPASFDSSKPATSSNSIAAPPPPPAFKPSKEEEEEQLKADKIKLALEKLKEAKVKKLVVKVEITDGSSKTLMVDERQTVRDVMDNLFEKTHCDCNVDWSVCETNPDLQTERAFEDHENLVEPLSTWTRDTENKVLFQEKKHKYEVFKNPQIFYLWKKDKKSLKDMKEKDKEQLLEENFCGASVIVPDLEGVLYLKEDGKKSWKQRYFLLRASGLYYSPKGKTKASRDLVCLVQFDNVNVYYCKEYRIKYKAPTDHCFMLKHPQIQKESQYIKFMCCDDEWSMNLWVTGIRVAKYGKQLYDNYKAAVRKASGSASWANRTIQASSTASTPSPTPKAKAANGHAPQPPVENKVPSNQSSLPPPPPSMDFLPPPPPDPMFPPPPPAPPAPPAPPVPVSSTKVNKFPPPPKFPQSSFPPPPMDDLPPPPPPPEIADLPPDFLPPPPPSFVSHGGESLPPPPPDPVASLPPPPPAFTSAGGAPPPPPPPPPPPAPAPAVNNPAGSVRKVAPPPPKRTTPQLAAPSGGDFMSELMNAMQKKRTQP.

Residues 82–141 (FATERDTSKGSVPVAPAPSKPQSNFSLPASFDSSKPATSSNSIAAPPPPPAFKPSKEEEE) are disordered. Over residues 101–116 (KPQSNFSLPASFDSSK) the composition is skewed to polar residues. One can recognise a Ras-associating domain in the interval 162-248 (KKLVVKVEIT…NKVLFQEKKH (87 aa)). Positions 292 to 401 (VPDLEGVLYL…WVTGIRVAKY (110 aa)) constitute a PH domain. Positions 420–646 (ASWANRTIQA…NAMQKKRTQP (227 aa)) are disordered. Positions 429 to 445 (ASSTASTPSPTPKAKAA) are enriched in low complexity. 4 stretches are compositionally biased toward pro residues: residues 465–500 (LPPP…PPVP), 509–536 (FPPP…PPPE), 560–577 (LPPP…PPPA), and 584–598 (APPP…PAPA).

Belongs to the MRL family.

The protein localises to the cell membrane. It localises to the cytoplasm. Its subcellular location is the cytoskeleton. Appears to function in the signal transduction from Ras activation to actin cytoskeletal remodeling. The polypeptide is Amyloid beta A4 precursor protein-binding family B member 1-interacting protein (apbb1ip) (Danio rerio (Zebrafish)).